A 1477-amino-acid polypeptide reads, in one-letter code: Neuralized-like protein 4 (1477 aa).

Disordered regions lie at residues 1-26 (MAEL…RKQP) and 168-196 (QPPP…RPDK). An NHR 1 domain is found at 1–167 (MAELHPRTGK…KCTQITVLSC (167 aa)). The span at 171 to 183 (PEEEEEEDAEEQE) shows a compositional bias: acidic residues. 4 consecutive NHR domains span residues 250–417 (ALLF…IVHN), 450–616 (QLLF…IMDE), 645–813 (DLRF…LTGG), and 841–1010 (SHRF…TVSS). The segment at 1012 to 1041 (LLEEPDATKPPSITSESEEEEDPADHGDPH) is disordered. The 164-residue stretch at 1048 to 1211 (SLQFLANHGK…QCEQVSIVTG (164 aa)) folds into the NHR 6 domain.

Ubiquitinated. This ubiquitination leads to proteasomal degradation.

It localises to the cytoplasm. The protein localises to the cytoskeleton. Its subcellular location is the microtubule organizing center. It is found in the centrosome. The protein resides in the centriole. Functionally, promotes CCP110 ubiquitination and proteasome-dependent degradation. By counteracting accumulation of CP110, maintains normal centriolar homeostasis and preventing formation of ectopic microtubular organizing centers. The sequence is that of Neuralized-like protein 4 (neurl4) from Xenopus tropicalis (Western clawed frog).